The primary structure comprises 75 residues: Stewaprin-a (75 aa).

The N-terminal stretch at 1-24 (MSSGGLLLLLGLLTLWAELIPVSG) is a signal peptide. Positions 27-72 (HPKKPGLCPPRPQKPPCVRECKNDWSCPGEQKCCRYGCIFECRDPI) constitute a WAP domain. 4 cysteine pairs are disulfide-bonded: C34/C60, C43/C64, C47/C59, and C53/C68.

Belongs to the venom waprin family. Expressed by the venom gland.

Its subcellular location is the secreted. In terms of biological role, damages membranes of susceptible bacteria. Has no hemolytic activity. Not toxic to mice. Does not inhibit the proteinases elastase and cathepsin G. This chain is Stewaprin-a, found in Hoplocephalus stephensii (Stephens's banded snake).